We begin with the raw amino-acid sequence, 207 residues long: Outer-membrane lipoprotein carrier protein (207 aa).

A signal peptide spans 1-21 (MRAIRMLLVSALALGTVTAYA).

This sequence belongs to the LolA family. Monomer.

It localises to the periplasm. Its function is as follows. Participates in the translocation of lipoproteins from the inner membrane to the outer membrane. Only forms a complex with a lipoprotein if the residue after the N-terminal Cys is not an aspartate (The Asp acts as a targeting signal to indicate that the lipoprotein should stay in the inner membrane). This Pseudomonas putida (strain GB-1) protein is Outer-membrane lipoprotein carrier protein.